The sequence spans 314 residues: Ribonucleoside-diphosphate reductase small subunit (314 aa).

Positions 73, 103, and 106 each coordinate Fe cation. Tyrosine 110 is a catalytic residue. The helical transmembrane segment at valine 160 to leucine 180 threads the bilayer. Fe cation contacts are provided by glutamate 166, glutamate 200, and histidine 203.

This sequence belongs to the ribonucleoside diphosphate reductase small chain family. As to quaternary structure, heterotetramer composed of a homodimer of the large subunit (R1) and a homodimer of the small subunit (R2). Larger multisubunit protein complex are also active, composed of (R1)n(R2)n. It depends on Fe cation as a cofactor.

It localises to the host membrane. The enzyme catalyses a 2'-deoxyribonucleoside 5'-diphosphate + [thioredoxin]-disulfide + H2O = a ribonucleoside 5'-diphosphate + [thioredoxin]-dithiol. Its function is as follows. Ribonucleoside-diphosphate reductase holoenzyme provides the precursors necessary for viral DNA synthesis. Allows virus growth in non-dividing cells, as well as reactivation from latency in infected hosts. Catalyzes the biosynthesis of deoxyribonucleotides from the corresponding ribonucleotides. The polypeptide is Ribonucleoside-diphosphate reductase small subunit (Bovine herpesvirus 1.1 (strain Cooper) (BoHV-1)).